Here is a 186-residue protein sequence, read N- to C-terminus: Adenine phosphoribosyltransferase (186 aa).

Belongs to the purine/pyrimidine phosphoribosyltransferase family. As to quaternary structure, homodimer.

It is found in the cytoplasm. The enzyme catalyses AMP + diphosphate = 5-phospho-alpha-D-ribose 1-diphosphate + adenine. Its pathway is purine metabolism; AMP biosynthesis via salvage pathway; AMP from adenine: step 1/1. In terms of biological role, catalyzes a salvage reaction resulting in the formation of AMP, that is energically less costly than de novo synthesis. The sequence is that of Adenine phosphoribosyltransferase from Xanthomonas campestris pv. campestris (strain B100).